Here is a 544-residue protein sequence, read N- to C-terminus: Esterase P (544 aa).

Positions 1 to 19 (MSIFKRLLCLTLLWIAALE) are cleaved as a signal peptide. N-linked (GlcNAc...) asparagine glycosylation occurs at Asn-75. Cys-83 and Cys-102 are disulfide-bonded. Asn-114 carries an N-linked (GlcNAc...) asparagine glycan. Ser-206 functions as the Acyl-ester intermediate in the catalytic mechanism. A disulfide bond links Cys-258 and Cys-270. N-linked (GlcNAc...) asparagine glycans are attached at residues Asn-262 and Asn-456. Catalysis depends on His-466, which acts as the Charge relay system. Cys-514 and Cys-535 are oxidised to a cystine.

The protein belongs to the type-B carboxylesterase/lipase family. Monomer.

Its subcellular location is the secreted. It catalyses the reaction a carboxylic ester + H2O = an alcohol + a carboxylate + H(+). This chain is Esterase P (Est-P), found in Drosophila melanogaster (Fruit fly).